A 123-amino-acid chain; its full sequence is Small ribosomal subunit protein uS12 (123 aa).

A 3-methylthioaspartic acid modification is found at Asp-89.

This sequence belongs to the universal ribosomal protein uS12 family. In terms of assembly, part of the 30S ribosomal subunit. Contacts proteins S8 and S17. May interact with IF1 in the 30S initiation complex.

Functionally, with S4 and S5 plays an important role in translational accuracy. In terms of biological role, interacts with and stabilizes bases of the 16S rRNA that are involved in tRNA selection in the A site and with the mRNA backbone. Located at the interface of the 30S and 50S subunits, it traverses the body of the 30S subunit contacting proteins on the other side and probably holding the rRNA structure together. The combined cluster of proteins S8, S12 and S17 appears to hold together the shoulder and platform of the 30S subunit. The polypeptide is Small ribosomal subunit protein uS12 (Beijerinckia indica subsp. indica (strain ATCC 9039 / DSM 1715 / NCIMB 8712)).